The chain runs to 3135 residues: MTSLNTKSGTPVVPLLLRSDDASHTDTLVEEVSCSLGLGRDRIENILPSTAFQQDVIDCAGSEKQRSIGHVAYEISNDIDISKLAAAWKDTINRTPALRTCAFTSSSGETYQVILKDSFVFSWMFSTSADQKDAVVKDEAAAAASGPRCNRFVLLDDPIQKKILIWTFSHALVDTSFQERILGRVLKAYTHGHDELSNRPYTPESSDPEDDGLSLTPTDGSKTPETEGLHPATQYWKNYLSDLNASAFPHLTSPLAVPYPNAKSEHRITFTASSSSTWPSVAVCRTALAILLSRYTHSQEALFGVVTEQQQLLVNGPTRTVVPFRVHCASDQSLSDIIDVVNANDDAIRQFADVGLRSISSTGDDGVAASGFQTVLLVTEGDNEQSSSTFEILQKTEESELFMPCTNRALLLHCQIASDGLSIIARYDKSLIHSQQIARLLRQLGQLIQRLRGSPDKLPSAGELDISTSEDQAEIQSWNSHPIPSQPTLIHKEMLKTASLSPSKVAICAWNGEWTYSELDNITSRLAALIKFSTPDQEHAILPIYFEKSKWVVASMLAVIKAGHAFALIDPNDPPARVSQVVGQTGATVALTSKLYRSKVQGIIERCIIVDDDLVQSLICTCALKPDPTLAKVTPEDLAYVIFTSGSTGDPKGIMIEHRAFSSCALQFGSALGINSDTRALQFGSHAFGACLLEIMTTLIHGGCVCIPSDDDRMNNVPAFVNRANVNWMMATPSYMGTFQPDDVPGLKTLVLVGEQMSPSVNAIWAPRVQVLDGYGQSESSSICFVGKISSSGADPNNIGHSVGAHSWIIDPSDPNRLVPIGAIGELVIESPGIARDYIIPPPTENSPFFSTVPPWYPFKELPNGIKFYRTGDLARYASDGTVVCLGRMDSQVKIRGQRVELGAVETHLRQQLPDDMSIVVEAVKPSDLPTSTVLVAFLITEATKSVRDATILDLAATKAMSVKLEHVLPRHSIPSCYISMQHLPRTATGKVDRRKLRSIGRDMLAQQLQGTSFRPSQLSSTTTSSQSKLEEVWRQCLGLEPGAANINSTFFELGGHSITAIKMVNMARSAGIDLKVSDIYQNPTLAGLEAIVNGSAEPYAIIPTTTRDGPVEQSYSQGRLWFLDQLEVGALWYLIPYAVRMRGLVDIDALSRALMALEQRHETLRTTFEDCDGAGVQIIHKILSKKLRVVDAPDSDYLDLLKQEQTTPFDLTSEAGWRALLIRLNDTDYILSIVMHHIVSDGWSIDVLRHDLSQLYAAALQGRDLASAMNPLPIQYSDFAMWQKQEAQALEHEKQLDYWKRQLADCSPAKLPTDFPRPALLSGEAGVVPVSIDRQLYQNLRDFCNENNTTSFAVLLAAFRAAHYRLTGVDDAVIGTPIANRNRWELENIIGFFVNTQCMRITVDDQDTFGSLVSQVRATTTAAFENEDVPFERVVSTMLPGSRDLSRTPLAQLIFAVHSQKDLGRFELQGLESEVVASKAYTRFDIEFHLFQEADGLRGSCNFATDLFRPETVENMVSVFFQILRNGLEKPNIPISVLPLTDGIEELRRLDLLRIKKVEYPRDASLVDIFRTQVAAYPDSLAVVDSSSRLTYTELDLQSDRLAARLRRQGMPAETLVGVLAPRSCEAIVAIIGILKANLAYLPFDVKSPSARLEDILSSIPGQTIVLLGSDVPVPELSIPGLEFMRIVDAIECCDTNNLNGHAHVDNSNPTATSLAYVLFTSGSTGRPKGVMVEHRVIVRLMTSNIIPDFPVQPRSAHMFNIAFDGATYEIFFTLLNGGTLVCIDYMTTLDVKALQDVFLKEKINAACMAPALLKLYLTDARDALRGLDFLMAAGDRFDGQDAIEAQSLVRGQCYNGYGPTENGIMSTRYPIAVGDSFINGVPIGRAVNNSGAYVTDLNQQLVGVGVMGELVVTGDGLARGYFDPALNENRFIHIEVDGQRVRAYRTGDRVRYRVGDGLIEFFGRMDTQFKIRGNRIESAEVEAAMLGHGSVRDAAVVVQKDDGEKADLVGFVVIDHDHSLEGDANDNQVEGWQDHFETEMYADIGDIDPFTIGKDFKGWTSMYDGSEIDKVEMQEWLDDTIKTLRDGQAPGHVLEVGTGSGMILFNLGDGLQSYRGLEPSKSAAAFTNSVIKSVPSLASKAEVHVGTAQDVSQLTDLHPDLVVINSVAQYFPSPEYLAQVADTLIHIPGVKRLFFGDMRTNATNKHFLAARAIRTLGDTATKDFVRQKMAELEEREEELLVEPAFFTALQDRFPDLVHHVEILPKNMHATNELSAYRYAAVVHIRDSDSVPVHTIEKSTWVDFGASRMDRTSLLQFLRRSKGSPTVAISNIPFAKTIFERQIVESLEAEDESKLDGAVWISAVGSDADSRASLSVPDLRRLAEEAGFRLEVSAARQWSQSGALDAVFHHLPSPSDTRRTLIKFPNDNHLRSSATLSNRPLQGLQRRRATLQVRERLQSLLPSYMIPSSIVVLDQMPLNPNGKVDRKELARQARIMPKQQTALPVQAVPISDIEAILCDEATATFGMKVDISDDFFKLGGHSLLATKLISRVEQRFNVRVTVKDVFDNPVFANLAVVIREGLASRTTLTNSQDKQGWSARVAPRTETEITLCDEASKLLGIEVGITDNFFDLGGHSMMATKLAMRLGRRLDTTIVVKDIFDYPVLFQLSKKLESTDSGTDNEEVQVDDYTPFELLSLENPQDFIQRQICSQLNVSLESIQDMYQSTQMQKSFLFSPGTGSPRPLTPFYIDFPVDSDPPTLVNACHSLVQHIDMFRTVFVLASEQLYQVVLKHLEVPIETIVTNQNVNTATNDFLVEHAQDPIRLGESLIRIAILKQSSSVRVLLRLSHALYDGLSLEPIVRNLHILFNGMSLLPPTQFRRYMEYTANSQEKGFEFWRDVIGDSPMTILSDAGNGAYHREVSPSKALHLSKVVSVPSQAIRSSIATQATVFNSACALVLSKESRSSDVVFGRIVSGRQGLPVNCQDIIGPCTNAVPVRAHIGTDGNHHQMLRDMQDQYLRSLPFETLGFEEIKRNCTDWPDSTTNFACCVTYHNFEYHPESEVEQQRVEMGVLSKHVELRKDEPLYDLAIAGEVEPDGMSLKVTIIARAHLFEEERVQYFLEEVCNTFQTLNFSL.

The condensation 1 stretch occupies residues 70 to 458; that stretch reads HVAYEISNDI…QRLRGSPDKL (389 aa). A disordered region spans residues 196–228; sequence LSNRPYTPESSDPEDDGLSLTPTDGSKTPETEG. Positions 499-896 are adenylation 1; sequence SLSPSKVAIC…GRMDSQVKIR (398 aa). In terms of domain architecture, Carrier 1 spans 1021 to 1097; sequence STTTSSQSKL…GLEAIVNGSA (77 aa). O-(pantetheine 4'-phosphoryl)serine is present on Ser1058. The segment at 1115 to 1542 is condensation 2; it reads SYSQGRLWFL…NIPISVLPLT (428 aa). An adenylation 2 region spans residues 1571-1974; the sequence is FRTQVAAYPD…GRMDTQFKIR (404 aa). The S-adenosyl-L-methionine-dependent N-methyltransferase stretch occupies residues 2042–2182; it reads MYADIGDIDP…FPSPEYLAQV (141 aa). 2 Carrier domains span residues 2509–2583 and 2603–2677; these read VPIS…REGL and APRT…ESTD. Residues Ser2543 and Ser2637 each carry the O-(pantetheine 4'-phosphoryl)serine modification. A condensation 3 region spans residues 2721–3127; it reads QDMYQSTQMQ…QYFLEEVCNT (407 aa).

Belongs to the NRP synthetase family.

It carries out the reaction 3 (R)-2-hydroxy-3-methylbutanoate + 3 L-phenylalanine + 3 S-adenosyl-L-methionine + 6 ATP = beauvericin + 6 AMP + 3 S-adenosyl-L-homocysteine + 6 diphosphate + 6 H(+). In terms of biological role, beauvericin nonribosomal cyclodepsipeptide synthetase; part of the gene cluster that mediates the biosynthesis of beauvericin (BEA), a non-ribosomal cyclic hexadepsipeptide that shows antibiotic, antifungal, insecticidal, and cancer cell antiproliferative and antihaptotactic activity. Ketoisovalerate reductase BEA2 catalyzes the NADPH-specific reduction of ketoisovaleric acid to hydroxyisovalerate, a precursor for beauvericin biosynthesis. The nonribosomal cyclodepsipeptide synthetase BEA1 then catalyzes the formation of beauvericin via condensation and cyclization of 3 dipeptidol monomers, each composed of one unit of hydroxyisovalerate and one unit of N-methyl-phenylalanine. This Gibberella fujikuroi (strain CBS 195.34 / IMI 58289 / NRRL A-6831) (Bakanae and foot rot disease fungus) protein is Beauvericin nonribosomal cyclodepsipeptide synthetase BEA1.